Consider the following 129-residue polypeptide: MAAKKTARKRRVKKHVESGVAHIHSTFNNTLVMITDVQGNAVAWSSAGALGFKGSRKSTPFAAQMAAEAAAKSAMDQGMKHVEVSVKGPGAGREAAIRALQAAGLEITAIRDVTPVPHNGSRPPKRRRV.

Belongs to the universal ribosomal protein uS11 family. In terms of assembly, part of the 30S ribosomal subunit. Interacts with proteins S7 and S18. Binds to IF-3.

Its function is as follows. Located on the platform of the 30S subunit, it bridges several disparate RNA helices of the 16S rRNA. Forms part of the Shine-Dalgarno cleft in the 70S ribosome. The sequence is that of Small ribosomal subunit protein uS11 from Lactobacillus gasseri (strain ATCC 33323 / DSM 20243 / BCRC 14619 / CIP 102991 / JCM 1131 / KCTC 3163 / NCIMB 11718 / NCTC 13722 / AM63).